A 286-amino-acid polypeptide reads, in one-letter code: Transcription factor MYB62 (286 aa).

2 consecutive HTH myb-type domains span residues 16–68 (DEEL…LNYL) and 69–123 (KPDI…QKQA). DNA-binding regions (H-T-H motif) lie at residues 44–68 (WNHV…LNYL) and 96–119 (WSKI…RTRV).

Expressed in leaves and flowers.

It is found in the nucleus. Transcription repressor of phosphate (Pi) starvation-induced genes. Negatively regulates Pi starvation responses via the repression of gibberellic acid (GA) biosynthesis and signaling. Modulates root architecture, phosphatase activity, and Pi uptake and accumulation. In Arabidopsis thaliana (Mouse-ear cress), this protein is Transcription factor MYB62.